A 147-amino-acid polypeptide reads, in one-letter code: Hemoglobin subunit beta (147 aa).

At V2 the chain carries N-acetylvaline. The region spanning 3–147 (HLTAEEKAAV…VATALAHKYH (145 aa)) is the Globin domain. T13 is modified (phosphothreonine). Residue S45 is modified to Phosphoserine. K60 carries the N6-acetyllysine modification. H64 provides a ligand contact to heme b. Residue K83 is modified to N6-acetyllysine. H93 contributes to the heme b binding site. At C94 the chain carries S-nitrosocysteine. K145 bears the N6-acetyllysine mark.

It belongs to the globin family. In terms of assembly, heterotetramer of two alpha chains and two beta chains. Red blood cells.

Its function is as follows. Involved in oxygen transport from the lung to the various peripheral tissues. The sequence is that of Hemoglobin subunit beta (HBB) from Carlito syrichta (Philippine tarsier).